A 218-amino-acid chain; its full sequence is tRNA (guanine-N(7)-)-methyltransferase (218 aa).

S-adenosyl-L-methionine is bound by residues glutamate 43, aspartate 68, glutamate 101, and asparagine 124. Substrate is bound by residues lysine 128 and aspartate 160.

Belongs to the class I-like SAM-binding methyltransferase superfamily. TrmB family.

The enzyme catalyses guanosine(46) in tRNA + S-adenosyl-L-methionine = N(7)-methylguanosine(46) in tRNA + S-adenosyl-L-homocysteine. Its pathway is tRNA modification; N(7)-methylguanine-tRNA biosynthesis. Catalyzes the formation of N(7)-methylguanine at position 46 (m7G46) in tRNA. In Acetivibrio thermocellus (strain ATCC 27405 / DSM 1237 / JCM 9322 / NBRC 103400 / NCIMB 10682 / NRRL B-4536 / VPI 7372) (Clostridium thermocellum), this protein is tRNA (guanine-N(7)-)-methyltransferase.